The chain runs to 311 residues: MSATLPDIAVTEPSALHAPLRWVGMQDIAIPVRLDEAEPSGTVAARAQVQVDLPRPELKGIHMSRLYRLLDRHLEQPLSPAMLSQLLQAMIDSHADCGSRAARVSLAFEVMLRMPALRSEGLAGWRAYPVRIDAQSRAGRSEMRLQIDVLYASTCPCSAALSRQLLSKAFAQQHAGQTALRVEDVAQWLQRNGSYATPHSQRSVAQVRVDLVARVQSFDIRALVLLCESALATPVQAAVRRIDEQAFARLNGANLMYVEDAARRLRKELAERYASFHVAVRHFESLHAHDAVAETGSDADVFHMIAESHGQ.

Belongs to the GTP cyclohydrolase IV family.

The catalysed reaction is GTP + H2O = 7,8-dihydroneopterin 3'-triphosphate + formate + H(+). The protein operates within cofactor biosynthesis; 7,8-dihydroneopterin triphosphate biosynthesis; 7,8-dihydroneopterin triphosphate from GTP: step 1/1. Converts GTP to 7,8-dihydroneopterin triphosphate. The protein is GTP cyclohydrolase FolE2 of Xanthomonas campestris pv. campestris (strain B100).